The chain runs to 246 residues: Neurotrophic factor BDNF precursor form (246 aa).

Positions 1 to 18 (MTILFLTMVISYLSCMKA) are cleaved as a signal peptide. Positions 19 to 127 (TPMKEVSIRG…AANMSMRVRR (109 aa)) are excised as a propeptide. Asn120 is a glycosylation site (N-linked (GlcNAc...) asparagine). 3 disulfide bridges follow: Cys140-Cys207, Cys185-Cys236, and Cys195-Cys238.

The protein belongs to the NGF-beta family.

Its subcellular location is the secreted. Its function is as follows. Promotes the survival of neuronal populations that are all located either in the central nervous system or directly connected to it. The polypeptide is Neurotrophic factor BDNF precursor form (BDNF) (Ptyas major (Chinese green snake)).